The following is a 449-amino-acid chain: Ribulose bisphosphate carboxylase large chain (449 aa).

Lys7 bears the N6,N6,N6-trimethyllysine mark. Residues Asn116 and Thr166 each coordinate substrate. Lys168 functions as the Proton acceptor in the catalytic mechanism. Lys170 contributes to the substrate binding site. Mg(2+) is bound by residues Lys194, Asp196, and Glu197. The residue at position 194 (Lys194) is an N6-carboxylysine. His287 serves as the catalytic Proton acceptor. Residues Arg288, His320, and Ser372 each contribute to the substrate site.

Belongs to the RuBisCO large chain family. Type I subfamily. Heterohexadecamer of 8 large chains and 8 small chains; disulfide-linked. The disulfide link is formed within the large subunit homodimers. Mg(2+) serves as cofactor. The disulfide bond which can form in the large chain dimeric partners within the hexadecamer appears to be associated with oxidative stress and protein turnover.

The protein localises to the plastid. The protein resides in the chloroplast. The catalysed reaction is 2 (2R)-3-phosphoglycerate + 2 H(+) = D-ribulose 1,5-bisphosphate + CO2 + H2O. It carries out the reaction D-ribulose 1,5-bisphosphate + O2 = 2-phosphoglycolate + (2R)-3-phosphoglycerate + 2 H(+). Its function is as follows. RuBisCO catalyzes two reactions: the carboxylation of D-ribulose 1,5-bisphosphate, the primary event in carbon dioxide fixation, as well as the oxidative fragmentation of the pentose substrate in the photorespiration process. Both reactions occur simultaneously and in competition at the same active site. The protein is Ribulose bisphosphate carboxylase large chain of Liriope muscari (Big blue lilyturf).